Here is an 892-residue protein sequence, read N- to C-terminus: DNA mismatch repair protein MutS (892 aa).

607-614 (GPNMSGKS) provides a ligand contact to ATP. Residues 833 to 855 (EESQLSFFGAEQSSKKQDKPALD) are disordered. Over residues 845 to 855 (SSKKQDKPALD) the composition is skewed to basic and acidic residues.

Belongs to the DNA mismatch repair MutS family.

Functionally, this protein is involved in the repair of mismatches in DNA. It is possible that it carries out the mismatch recognition step. This protein has a weak ATPase activity. In Bacillus anthracis (strain A0248), this protein is DNA mismatch repair protein MutS.